Here is a 201-residue protein sequence, read N- to C-terminus: Phosphoheptose isomerase (201 aa).

Positions I36–A195 constitute an SIS domain. N51–G53 serves as a coordination point for substrate. Residues H60 and E64 each coordinate Zn(2+). Residues E64, N93–D94, S119–S121, S124, and Q171 each bind substrate. Residues Q171 and H179 each contribute to the Zn(2+) site.

Belongs to the SIS family. GmhA subfamily. The cofactor is Zn(2+).

Its subcellular location is the cytoplasm. It catalyses the reaction 2 D-sedoheptulose 7-phosphate = D-glycero-alpha-D-manno-heptose 7-phosphate + D-glycero-beta-D-manno-heptose 7-phosphate. Its pathway is carbohydrate biosynthesis; D-glycero-D-manno-heptose 7-phosphate biosynthesis; D-glycero-alpha-D-manno-heptose 7-phosphate and D-glycero-beta-D-manno-heptose 7-phosphate from sedoheptulose 7-phosphate: step 1/1. In terms of biological role, catalyzes the isomerization of sedoheptulose 7-phosphate in D-glycero-D-manno-heptose 7-phosphate. The sequence is that of Phosphoheptose isomerase from Thermodesulfovibrio yellowstonii (strain ATCC 51303 / DSM 11347 / YP87).